The chain runs to 354 residues: Kelch domain-containing protein 8B (354 aa).

Kelch repeat units follow at residues 1–31 (MSAG…HQDE), 32–79 (HLLV…VLGK), 81–127 (VLVV…ERDG), 128–175 (MVYA…LHGN), 176–222 (KIYV…MAEG), 224–281 (VFSL…SLGG), 282–329 (HIVA…QAGP), and 331–354 (LFVI…RDGV).

It localises to the cytoplasm. It is found in the midbody. Involved in pinching off the separated nuclei at the cleavage furrow and in cytokinesis. Required for mitotic integrity and maintenance of chromosomal stability. Protects cells against mitotic errors, centrosomal amplification, micronucleus formation and aneuploidy. Plays a key role of midbody function involving abscission of the daughter cells during cytokinesis and appropriate chromosomal and nuclear segregation into the daughter cells. The polypeptide is Kelch domain-containing protein 8B (KLHDC8B) (Pongo abelii (Sumatran orangutan)).